Consider the following 587-residue polypeptide: Phosphatidylinositol-3-phosphatase SAC1 (587 aa).

Over 1–520 the chain is Cytoplasmic; sequence MATAAYEQLK…SPLSVPRDWK (520 aa). The region spanning 122-451 is the SAC domain; it reads LNHVLNVDGF…ANACAKQYAG (330 aa). The segment at 452 to 587 is essential for phosphatidylinositol-4-phosphate phosphatase activity; it reads TGALKTDFTR…PRLVQKEKID (136 aa). Lysine 456 is modified (N6-acetyllysine). A helical transmembrane segment spans residues 521–541; that stretch reads FLALPIIMVVAFSMCIICLLM. The Lumenal portion of the chain corresponds to 542–548; that stretch reads AGDTWTE. The chain crosses the membrane as a helical span at residues 549–569; that stretch reads TLAYVLFWGVASIGTFFIILY. The Cytoplasmic segment spans residues 570 to 587; sequence NGKDFVDAPRLVQKEKID.

In terms of assembly, interacts with TMEM39A. Interacts with SEC23A and SEC24A; this interaction is reduced in the absence of TMEM39A. Interacts with PLEKHA3 and VAPA and/or VAPB to form a ternary complex.

It localises to the endoplasmic reticulum membrane. The protein localises to the golgi apparatus membrane. The enzyme catalyses a 1,2-diacyl-sn-glycero-3-phospho-(1D-myo-inositol-3-phosphate) + H2O = a 1,2-diacyl-sn-glycero-3-phospho-(1D-myo-inositol) + phosphate. It carries out the reaction a 1,2-diacyl-sn-glycero-3-phospho-(1D-myo-inositol 4-phosphate) + H2O = a 1,2-diacyl-sn-glycero-3-phospho-(1D-myo-inositol) + phosphate. Its function is as follows. Phosphoinositide phosphatase which catalyzes the hydrolysis of phosphatidylinositol 4-phosphate (PtdIns(4)P), phosphatidylinositol 3-phosphate (PtdIns(3)P) and has low activity towards phosphatidylinositol-3,5-bisphosphate (PtdIns(3,5)P2). Shows a very robust PtdIns(4)P phosphatase activity when it binds PtdIns(4)P in a 'cis' configuration in the cellular environment, with much less activity seen when it binds PtdIns(4)P in 'trans' configuration. PtdIns(4)P phosphatase activity (when it binds PtdIns(4)P in 'trans' configuration) is enhanced in the presence of PLEKHA3. The protein is Phosphatidylinositol-3-phosphatase SAC1 (SACM1L) of Pongo abelii (Sumatran orangutan).